The chain runs to 273 residues: Large ribosomal subunit protein uL2cz/uL2cy (273 aa).

The interval 224-273 (NPVDHPHGGGEGRAPIGRKKPATPWGYPALGRRSRKRNKYSDRFILRRRK) is disordered. The segment covering 262-273 (KYSDRFILRRRK) has biased composition (basic and acidic residues).

The protein belongs to the universal ribosomal protein uL2 family. Part of the 50S ribosomal subunit.

It is found in the plastid. The protein resides in the chloroplast. The protein is Large ribosomal subunit protein uL2cz/uL2cy (rpl2-A) of Piper cenocladum (Ant piper).